We begin with the raw amino-acid sequence, 225 residues long: Cold-regulated 413 inner membrane protein 1, chloroplastic (225 aa).

Residues 1–76 (MASLCLSSSR…RKRGSSVVCY (76 aa)) constitute a chloroplast transit peptide. Position 77 (alanine 77) is a topological domain, stromal. A helical membrane pass occupies residues 78 to 98 (APISANSLQWISTISCLALML). Topologically, residues 99–102 (ARGT) are chloroplast intermembrane. A helical transmembrane segment spans residues 103 to 123 (GIHKSVVVPLFALHAPSSIVA). Topologically, residues 124 to 128 (WIKGE) are stromal. A helical transmembrane segment spans residues 129-149 (YGVWAAFLALIARLFFTFPGE). Over 150–151 (LE) the chain is Chloroplast intermembrane. The chain crosses the membrane as a helical span at residues 152 to 172 (LPFIALLLVIVAPYQVMNIRG). At 173-175 (KQE) the chain is on the stromal side. A helical transmembrane segment spans residues 176–196 (GAIIAIAISGFLAFQHFSRAG). Residues 197–204 (SLEKAYEK) lie on the Chloroplast intermembrane side of the membrane. The chain crosses the membrane as a helical span at residues 205–225 (GSVLATVAIIGVTVVSLLLLL).

It belongs to the Cold-regulated 413 protein family.

It is found in the plastid. Its subcellular location is the chloroplast inner membrane. In Arabidopsis thaliana (Mouse-ear cress), this protein is Cold-regulated 413 inner membrane protein 1, chloroplastic (COR413IM1).